Reading from the N-terminus, the 693-residue chain is Zinc finger protein 441 (693 aa).

One can recognise a KRAB domain in the interval 4–79 (VAFEDVAINF…ERACEIKDNS (76 aa)). A C2H2-type 1 zinc finger spans residues 169–190 (YDCKECASFSSLENLQRHMAAH). The C2H2-type 2; degenerate zinc finger occupies 196–218 (RICKLCGNAFIWPSLFHMLRRTH). The C2H2-type 3; degenerate zinc-finger motif lies at 224–246 (YEYEQCSTAFPAYSSTLRHERTH). The C2H2-type 4; degenerate zinc finger occupies 252-274 (YQCKQCGKAFSCSCYTQLYERTH). 15 consecutive C2H2-type zinc fingers follow at residues 280–302 (YECK…MIVH), 308–330 (HKCK…KRTH), 336–358 (YECK…MITH), 364–386 (HKCK…ETTH), 392–413 (YKCE…ETTH), 419–441 (YKCK…ERIH), 447–469 (YKCK…EKTH), 475–497 (YECK…MIMH), 503–525 (HKCK…ERIH), 531–553 (YKCK…ERTH), 559–581 (YGCQ…MITH), 587–609 (HKCK…ERTH), 615–637 (YECK…ERVH), 643–665 (YKCK…ERTH), and 671–693 (YKCK…EMTH).

This sequence belongs to the krueppel C2H2-type zinc-finger protein family.

Its subcellular location is the nucleus. Its function is as follows. May be involved in transcriptional regulation. The protein is Zinc finger protein 441 (ZNF441) of Homo sapiens (Human).